Consider the following 444-residue polypeptide: ATP-dependent protease ATPase subunit HslU (444 aa).

Residues I20 and 62–67 (GVGKTE) contribute to the ATP site. The segment at 130-158 (EDRILDALVPPPRGASGEPERGEDNSARQ) is disordered. Residues D257, E322, and R394 each contribute to the ATP site.

Belongs to the ClpX chaperone family. HslU subfamily. A double ring-shaped homohexamer of HslV is capped on each side by a ring-shaped HslU homohexamer. The assembly of the HslU/HslV complex is dependent on binding of ATP.

It is found in the cytoplasm. Its function is as follows. ATPase subunit of a proteasome-like degradation complex; this subunit has chaperone activity. The binding of ATP and its subsequent hydrolysis by HslU are essential for unfolding of protein substrates subsequently hydrolyzed by HslV. HslU recognizes the N-terminal part of its protein substrates and unfolds these before they are guided to HslV for hydrolysis. The polypeptide is ATP-dependent protease ATPase subunit HslU (Bordetella bronchiseptica (strain ATCC BAA-588 / NCTC 13252 / RB50) (Alcaligenes bronchisepticus)).